The primary structure comprises 312 residues: Glycerol-3-phosphate dehydrogenase [NAD(P)+] (312 aa).

4 residues coordinate NADPH: W11, R30, R31, and K95. Sn-glycerol 3-phosphate-binding residues include K95, G123, and S125. Position 127 (A127) interacts with NADPH. Sn-glycerol 3-phosphate-binding residues include K177, D230, S240, R241, and N242. Residue K177 is the Proton acceptor of the active site. An NADPH-binding site is contributed by R241. Residues V265 and E267 each contribute to the NADPH site.

The protein belongs to the NAD-dependent glycerol-3-phosphate dehydrogenase family.

Its subcellular location is the cytoplasm. It catalyses the reaction sn-glycerol 3-phosphate + NAD(+) = dihydroxyacetone phosphate + NADH + H(+). The enzyme catalyses sn-glycerol 3-phosphate + NADP(+) = dihydroxyacetone phosphate + NADPH + H(+). It functions in the pathway membrane lipid metabolism; glycerophospholipid metabolism. In terms of biological role, catalyzes the reduction of the glycolytic intermediate dihydroxyacetone phosphate (DHAP) to sn-glycerol 3-phosphate (G3P), the key precursor for phospholipid synthesis. The protein is Glycerol-3-phosphate dehydrogenase [NAD(P)+] of Helicobacter pylori (strain HPAG1).